The primary structure comprises 755 residues: Primary amine oxidase (755 aa).

The N-terminal stretch at 1 to 30 is a signal peptide; sequence MANGLKFSPRKTALALAVAVVCAWQSPVFA. Substrate contacts are provided by residues 411–422 and 493–498; these read YLDSGDYGMGTL and VGNYDY. The active-site Proton acceptor is aspartate 413. Tyrosine 496 functions as the Schiff-base intermediate with substrate; via topaquinone in the catalytic mechanism. At tyrosine 496 the chain carries 2',4',5'-topaquinone. Histidine 554 and histidine 556 together coordinate Cu cation. The Ca(2+) site is built by aspartate 563, leucine 564, aspartate 565, glutamate 603, tyrosine 697, aspartate 700, glutamate 702, and aspartate 708. Aspartate 563 is a Mn(2+) binding site. Aspartate 565 contacts Mn(2+). Aspartate 708 serves as a coordination point for Mn(2+). Residue histidine 719 coordinates Cu cation.

This sequence belongs to the copper/topaquinone oxidase family. In terms of assembly, homodimer. Requires Cu cation as cofactor. Zn(2+) serves as cofactor. It depends on Ca(2+) as a cofactor. L-topaquinone is required as a cofactor. The cofactor is Mn(2+). Post-translationally, topaquinone (TPQ) is generated by copper-dependent autoxidation of a specific tyrosyl residue.

Its subcellular location is the periplasm. The catalysed reaction is a primary methyl amine + O2 + H2O = an aldehyde + H2O2 + NH4(+). Functionally, active on tyramine, tryptamine, beta-phenethylamine and dopamine. The chain is Primary amine oxidase (maoA) from Klebsiella aerogenes (Enterobacter aerogenes).